The sequence spans 190 residues: Probable thymidylate kinase (190 aa).

Residue 7–14 (GIDGAGKT) coordinates ATP.

Belongs to the thymidylate kinase family.

It carries out the reaction dTMP + ATP = dTDP + ADP. The chain is Probable thymidylate kinase from Thermoplasma volcanium (strain ATCC 51530 / DSM 4299 / JCM 9571 / NBRC 15438 / GSS1).